Reading from the N-terminus, the 221-residue chain is Lipoprotein-releasing system ATP-binding protein LolD (221 aa).

One can recognise an ABC transporter domain in the interval 6–220 (LILKKISKHY…YNLKNGLLNI (215 aa)). 42–49 (GSSGSGKS) is an ATP binding site.

It belongs to the ABC transporter superfamily. Lipoprotein translocase (TC 3.A.1.125) family. In terms of assembly, the complex is composed of two ATP-binding proteins (LolD) and two transmembrane proteins (LolC and LolE).

It localises to the cell inner membrane. Functionally, part of the ABC transporter complex LolCDE involved in the translocation of mature outer membrane-directed lipoproteins, from the inner membrane to the periplasmic chaperone, LolA. Responsible for the formation of the LolA-lipoprotein complex in an ATP-dependent manner. The protein is Lipoprotein-releasing system ATP-binding protein LolD of Rickettsia typhi (strain ATCC VR-144 / Wilmington).